Consider the following 161-residue polypeptide: S-ribosylhomocysteine lyase (161 aa).

3 residues coordinate Fe cation: His-53, His-57, and Cys-124.

The protein belongs to the LuxS family. Homodimer. Requires Fe cation as cofactor.

The enzyme catalyses S-(5-deoxy-D-ribos-5-yl)-L-homocysteine = (S)-4,5-dihydroxypentane-2,3-dione + L-homocysteine. Its function is as follows. Involved in the synthesis of autoinducer 2 (AI-2) which is secreted by bacteria and is used to communicate both the cell density and the metabolic potential of the environment. The regulation of gene expression in response to changes in cell density is called quorum sensing. Catalyzes the transformation of S-ribosylhomocysteine (RHC) to homocysteine (HC) and 4,5-dihydroxy-2,3-pentadione (DPD). The sequence is that of S-ribosylhomocysteine lyase from Phocaeicola vulgatus (strain ATCC 8482 / DSM 1447 / JCM 5826 / CCUG 4940 / NBRC 14291 / NCTC 11154) (Bacteroides vulgatus).